A 386-amino-acid chain; its full sequence is 4-hydroxy-3-methylbut-2-en-1-yl diphosphate synthase (flavodoxin) (386 aa).

[4Fe-4S] cluster contacts are provided by Cys289, Cys292, Cys324, and Glu331.

Belongs to the IspG family. [4Fe-4S] cluster serves as cofactor.

The catalysed reaction is (2E)-4-hydroxy-3-methylbut-2-enyl diphosphate + oxidized [flavodoxin] + H2O + 2 H(+) = 2-C-methyl-D-erythritol 2,4-cyclic diphosphate + reduced [flavodoxin]. It participates in isoprenoid biosynthesis; isopentenyl diphosphate biosynthesis via DXP pathway; isopentenyl diphosphate from 1-deoxy-D-xylulose 5-phosphate: step 5/6. Functionally, converts 2C-methyl-D-erythritol 2,4-cyclodiphosphate (ME-2,4cPP) into 1-hydroxy-2-methyl-2-(E)-butenyl 4-diphosphate. This chain is 4-hydroxy-3-methylbut-2-en-1-yl diphosphate synthase (flavodoxin), found in Nitratidesulfovibrio vulgaris (strain ATCC 29579 / DSM 644 / CCUG 34227 / NCIMB 8303 / VKM B-1760 / Hildenborough) (Desulfovibrio vulgaris).